Reading from the N-terminus, the 353-residue chain is Thrombopoietin (353 aa).

Positions 1-21 (MELTELLLVVMLLLTARLTLS) are cleaved as a signal peptide. The O-linked (GalNAc...) serine glycan is linked to Ser22. 2 disulfide bridges follow: Cys28–Cys172 and Cys50–Cys106. Residues Thr58, Thr131, Thr179, and Thr180 are each glycosylated (O-linked (GalNAc...) threonine). Ser184 is a glycosylation site (O-linked (GalNAc...) serine). N-linked (GlcNAc...) (complex) asparagine glycans are attached at residues Asn197 and Asn206. A glycan (O-linked (GalNAc...) threonine) is linked at Thr213. Asn234 and Asn255 each carry an N-linked (GlcNAc...) (complex) asparagine glycan. Positions 257-353 (TRGLFPGPSR…THSQNLSQEG (97 aa)) are disordered. The O-linked (GalNAc...) serine glycan is linked to Ser265. Residues 275–304 (SSGTSDTGSLPPNLQPGYSPSPTHPPTGQY) are compositionally biased toward polar residues. Residues 324–335 (LPDPSAPTPTPT) are compositionally biased toward pro residues. N-linked (GlcNAc...) asparagine glycans are attached at residues Asn340 and Asn348. Residues 343 to 353 (YTHSQNLSQEG) show a composition bias toward polar residues.

The protein belongs to the EPO/TPO family. In terms of assembly, interacts with MPL/TPOR.

It localises to the secreted. Lineage-specific cytokine affecting the proliferation and maturation of megakaryocytes from their committed progenitor cells. It acts at a late stage of megakaryocyte development. It may be the major physiological regulator of circulating platelets. The chain is Thrombopoietin (THPO) from Homo sapiens (Human).